The sequence spans 713 residues: Cadherin-13 (713 aa).

A signal peptide spans 1–22 (MQPATPLVLCVLLSQVLLLTSA). A propeptide spanning residues 23 to 138 (EDLDCTPGFQ…RTSPVPRQKR (116 aa)) is cleaved from the precursor. N-linked (GlcNAc...) asparagine glycosylation is found at Asn-52 and Asn-86. Cadherin domains lie at 139-245 (SIVV…RPIF), 246-363 (REGP…SPKF), 364-477 (TKKE…SPVF), 478-585 (YPDP…APFI), and 584-694 (FIYP…AAGA). Residues 156–178 (PRDVGKVVDSDRPEGSKFRLTGK) are disordered. Basic and acidic residues predominate over residues 158–172 (DVGKVVDSDRPEGSK). Residues Asn-382, Asn-489, Asn-500, Asn-530, Asn-598, Asn-638, and Asn-671 are each glycosylated (N-linked (GlcNAc...) asparagine). Gly-693 carries GPI-anchor amidated glycine lipidation. Residues 694-713 (APHFSAATALLLSLFSLARL) constitute a propeptide, removed in mature form.

As to quaternary structure, by contrast to classical cadherins, homodimerization in trans is not mediated by cadherin EC1 domain strand-swapping, but instead through a homophilic adhesive interface which joins two elongated EC1-EC2 domains through a region near their Ca2+-binding sites to form a tetrahedral, X-like shape.

It localises to the cell membrane. It is found in the cytoplasm. In terms of biological role, cadherins are calcium-dependent cell adhesion proteins. They preferentially interact with themselves in a homophilic manner in connecting cells; cadherins may thus contribute to the sorting of heterogeneous cell types. May act as a negative regulator of neural cell growth. The chain is Cadherin-13 (CDH13) from Bos taurus (Bovine).